Consider the following 170-residue polypeptide: Transcription factor E (170 aa).

The HTH TFE/IIEalpha-type domain maps to 1–93; sequence MKDVYLYIVE…TWYVDDEIIK (93 aa).

It belongs to the TFE family. In terms of assembly, monomer. Interaction with RNA polymerase subunits RpoF and RpoE is necessary for Tfe stimulatory transcription activity. Able to interact with Tbp and RNA polymerase in the absence of DNA promoter. Interacts both with the preinitiation and elongation complexes.

Functionally, transcription factor that plays a role in the activation of archaeal genes transcribed by RNA polymerase. Facilitates transcription initiation by enhancing TATA-box recognition by TATA-box-binding protein (Tbp), and transcription factor B (Tfb) and RNA polymerase recruitment. Not absolutely required for transcription in vitro, but particularly important in cases where Tbp or Tfb function is not optimal. It dynamically alters the nucleic acid-binding properties of RNA polymerases by stabilizing the initiation complex and destabilizing elongation complexes. Seems to translocate with the RNA polymerase following initiation and acts by binding to the non template strand of the transcription bubble in elongation complexes. The chain is Transcription factor E from Pyrobaculum aerophilum (strain ATCC 51768 / DSM 7523 / JCM 9630 / CIP 104966 / NBRC 100827 / IM2).